Here is a 190-residue protein sequence, read N- to C-terminus: Adenine phosphoribosyltransferase (190 aa).

This sequence belongs to the purine/pyrimidine phosphoribosyltransferase family. As to quaternary structure, homodimer.

It localises to the cytoplasm. It carries out the reaction AMP + diphosphate = 5-phospho-alpha-D-ribose 1-diphosphate + adenine. Its pathway is purine metabolism; AMP biosynthesis via salvage pathway; AMP from adenine: step 1/1. In terms of biological role, catalyzes a salvage reaction resulting in the formation of AMP, that is energically less costly than de novo synthesis. This Cupriavidus pinatubonensis (strain JMP 134 / LMG 1197) (Cupriavidus necator (strain JMP 134)) protein is Adenine phosphoribosyltransferase.